The primary structure comprises 414 residues: Serine/threonine-protein kinase 32B (414 aa).

The region spanning Phe23–Leu283 is the Protein kinase domain. ATP is bound by residues Ile29–Val37 and Lys52. Residue Asp146 is the Proton acceptor of the active site. The tract at residues Gln374–Gln396 is disordered.

It belongs to the protein kinase superfamily. Ser/Thr protein kinase family. Mg(2+) is required as a cofactor.

The catalysed reaction is L-seryl-[protein] + ATP = O-phospho-L-seryl-[protein] + ADP + H(+). It carries out the reaction L-threonyl-[protein] + ATP = O-phospho-L-threonyl-[protein] + ADP + H(+). This chain is Serine/threonine-protein kinase 32B, found in Homo sapiens (Human).